Consider the following 491-residue polypeptide: Nucleoside transporter 1.2 (491 aa).

The next 6 helical transmembrane spans lie at 27–47 (FYVY…VNAV), 82–102 (YNLI…LSWF), 109–129 (VRLL…MVVP), 136–156 (AGAV…KSIF), 173–193 (STMM…QIIV), and 209–229 (KIYY…LILL). Basic and acidic residues predominate over residues 261-273 (HTDEHPTHDKEGR). 2 disordered regions span residues 261–280 (HTDE…SGKE) and 290–309 (AAAK…PHEV). An N-linked (GlcNAc...) asparagine glycan is attached at N274. 5 consecutive transmembrane segments (helical) span residues 333-353 (MFVA…GIAV), 361-381 (WFST…RFSP), 395-415 (WIIV…LLHS), 427-447 (VMEV…LVLG), and 460-480 (FVAG…GTVL).

The protein belongs to the SLC29A/ENT transporter (TC 2.A.57) family.

The protein localises to the membrane. The catalysed reaction is adenosine(in) + H(+)(in) = adenosine(out) + H(+)(out). It carries out the reaction uridine(in) + H(+)(in) = uridine(out) + H(+)(out). Functionally, sodium-independent nucleoside:H(+) symporter; transports adenosine with high affinity and uridine with moderate affinity. Can transport cytidine and thymidine. This chain is Nucleoside transporter 1.2, found in Leishmania donovani.